The sequence spans 280 residues: Energy-coupling factor transporter ATP-binding protein EcfA (280 aa).

One can recognise an ABC transporter domain in the interval Ile-5–Glu-240. Gly-40 to Ser-47 is a binding site for ATP.

It belongs to the ABC transporter superfamily. Energy-coupling factor EcfA family. Forms a stable energy-coupling factor (ECF) transporter complex composed of 2 membrane-embedded substrate-binding proteins (S component), 2 ATP-binding proteins (A component) and 2 transmembrane proteins (T component).

The protein resides in the cell membrane. Its function is as follows. ATP-binding (A) component of a common energy-coupling factor (ECF) ABC-transporter complex. Unlike classic ABC transporters this ECF transporter provides the energy necessary to transport a number of different substrates. The protein is Energy-coupling factor transporter ATP-binding protein EcfA of Pediococcus pentosaceus (strain ATCC 25745 / CCUG 21536 / LMG 10740 / 183-1w).